The sequence spans 479 residues: MDYHSPYFFGYLIGLIHLLGIIAALHAVFTVRTAQGAIAWALSLLFIPYFTLIPYLIFGARSFYAYIQARRQANQEMHVAMANLNWRPWVEEALTARESDSYAALRAMPKLGRMPCLANNEVKLLIDGEATFKAIFAAIEAARNTVLVQFFIIHDDTLGKQLQRLLLRKAAEGVQVFVLYDRVGSHALPGSYSQVLRDGGVQIQAFATRRGWFNRFQVNFRNHRKIVVVDGLRGFLGGHNVGDEYLGANPHLSPWRDTHVQIAGPVLACLQESFAEDWYWATRQLPPLILPDTYPENGVLCQALASGPADPQETCALFFLEAIHSATRRVWITSPYFIPDEAIFAALRLAVLRGVDVRVLIPSRPDHRIVYAASSLFAFEAVRAGVRMFRYQPGFLHQKVVLVDDEVSAIGSANLDNRSFRLNFEITLLTVDRAFADQVEQMLQSDFDQAREITAEDSRDTHRLQQLGMRIARLISPIL.

The next 2 helical transmembrane spans lie at 8 to 28 (FFGY…LHAV) and 38 to 58 (IAWA…YLIF). PLD phosphodiesterase domains are found at residues 218–245 (VNFR…GDEY) and 392–419 (QPGF…DNRS). Catalysis depends on residues His-223, Lys-225, Asp-230, His-397, Lys-399, and Asp-404.

This sequence belongs to the phospholipase D family. Cardiolipin synthase subfamily. ClsA sub-subfamily.

It localises to the cell inner membrane. It carries out the reaction 2 a 1,2-diacyl-sn-glycero-3-phospho-(1'-sn-glycerol) = a cardiolipin + glycerol. Its function is as follows. Catalyzes the reversible phosphatidyl group transfer from one phosphatidylglycerol molecule to another to form cardiolipin (CL) (diphosphatidylglycerol) and glycerol. The polypeptide is Cardiolipin synthase A (Pseudomonas entomophila (strain L48)).